Reading from the N-terminus, the 513-residue chain is ATP synthase subunit alpha (513 aa).

169-176 (GDRQIGKT) is a binding site for ATP.

It belongs to the ATPase alpha/beta chains family. As to quaternary structure, F-type ATPases have 2 components, CF(1) - the catalytic core - and CF(0) - the membrane proton channel. CF(1) has five subunits: alpha(3), beta(3), gamma(1), delta(1), epsilon(1). CF(0) has three main subunits: a(1), b(2) and c(9-12). The alpha and beta chains form an alternating ring which encloses part of the gamma chain. CF(1) is attached to CF(0) by a central stalk formed by the gamma and epsilon chains, while a peripheral stalk is formed by the delta and b chains.

Its subcellular location is the cell inner membrane. It catalyses the reaction ATP + H2O + 4 H(+)(in) = ADP + phosphate + 5 H(+)(out). Produces ATP from ADP in the presence of a proton gradient across the membrane. The alpha chain is a regulatory subunit. This chain is ATP synthase subunit alpha, found in Vibrio alginolyticus.